A 507-amino-acid chain; its full sequence is Glutamyl-tRNA(Gln) amidotransferase subunit A, mitochondrial (507 aa).

Catalysis depends on charge relay system residues Lys79 and Ser160. Ser184 functions as the Acyl-ester intermediate in the catalytic mechanism.

Belongs to the amidase family. GatA subfamily. As to quaternary structure, subunit of the heterotrimeric GatCAB amidotransferase (AdT) complex, composed of A, B and C subunits.

It localises to the mitochondrion. It catalyses the reaction L-glutamyl-tRNA(Gln) + L-glutamine + ATP + H2O = L-glutaminyl-tRNA(Gln) + L-glutamate + ADP + phosphate + H(+). In terms of biological role, allows the formation of correctly charged Gln-tRNA(Gln) through the transamidation of misacylated Glu-tRNA(Gln) in the mitochondria. The reaction takes place in the presence of glutamine and ATP through an activated gamma-phospho-Glu-tRNA(Gln). This chain is Glutamyl-tRNA(Gln) amidotransferase subunit A, mitochondrial, found in Drosophila pseudoobscura pseudoobscura (Fruit fly).